Reading from the N-terminus, the 129-residue chain is Small ribosomal subunit protein uS11 (129 aa).

Residues 107–129 (IEDVTPVPHDSIRGKGGRRGRRV) form a disordered region.

The protein belongs to the universal ribosomal protein uS11 family. As to quaternary structure, part of the 30S ribosomal subunit.

Located on the platform of the 30S subunit. The polypeptide is Small ribosomal subunit protein uS11 (Methanoculleus marisnigri (strain ATCC 35101 / DSM 1498 / JR1)).